Here is a 482-residue protein sequence, read N- to C-terminus: Chitobiosyldiphosphodolichol beta-mannosyltransferase (482 aa).

The Lumenal portion of the chain corresponds to 1 to 2 (MA). The chain crosses the membrane as a helical span at residues 3-23 (ASCVALLVLALLLLVLLLGLW). The Cytoplasmic portion of the chain corresponds to 24–99 (KRGRQTGRAR…DLRGLGAGPR (76 aa)). Residues 100 to 120 (ILQYGVKVVFQAVYLLWKMMR) constitute an intramembrane region (helical). Over 121–482 (MDPAAYIFLQ…PCGHPSCRGF (362 aa)) the chain is Cytoplasmic. S242 bears the Phosphoserine mark.

It belongs to the glycosyltransferase group 1 family. Glycosyltransferase 33 subfamily.

Its subcellular location is the endoplasmic reticulum membrane. It carries out the reaction an N,N'-diacetylchitobiosyl-diphospho-di-trans,poly-cis-dolichol + GDP-alpha-D-mannose = a beta-D-Man-(1-&gt;4)-beta-D-GlcNAc-(1-&gt;4)-alpha-D-GlcNAc-diphospho-di-trans,poly-cis-dolichol + GDP + H(+). It functions in the pathway protein modification; protein glycosylation. Its function is as follows. Mannosyltransferase that operates in the biosynthetic pathway of dolichol-linked oligosaccharides, the glycan precursors employed in protein asparagine (N)-glycosylation. The assembly of dolichol-linked oligosaccharides begins on the cytosolic side of the endoplasmic reticulum membrane and finishes in its lumen. The sequential addition of sugars to dolichol pyrophosphate produces dolichol-linked oligosaccharides containing fourteen sugars, including two GlcNAcs, nine mannoses and three glucoses. Once assembled, the oligosaccharide is transferred from the lipid to nascent proteins by oligosaccharyltransferases. Catalyzes, on the cytoplasmic face of the endoplasmic reticulum, the addition of the first mannose residues to the dolichol-linked oligosaccharide chain, to produce Man1GlcNAc(2)-PP-dolichol core oligosaccharide. Man1GlcNAc(2)-PP-dolichol is a substrate for ALG2, the following enzyme in the biosynthetic pathway. The polypeptide is Chitobiosyldiphosphodolichol beta-mannosyltransferase (Mus musculus (Mouse)).